The primary structure comprises 456 residues: uncharacterized protein (456 aa).

Composition is skewed to basic and acidic residues over residues 181–210 (DQRKESIVNDERKKNPEFREKPDKNEDKKV) and 217–231 (KEIENKGIDHEENEE). The interval 181–231 (DQRKESIVNDERKKNPEFREKPDKNEDKKVKPPPSLKEIENKGIDHEENEE) is disordered. Residues 216-248 (LKEIENKGIDHEENEEDKKRELMFKLQLLQKQY) are a coiled coil. The chain crosses the membrane as a helical span at residues 347 to 365 (LALAILFNAVWFIAAKMIM). The span at 383-407 (NKSGTTPNSVSPRTWGNSKSPQSEF) shows a compositional bias: polar residues. The disordered stretch occupies residues 383–456 (NKSGTTPNSV…MREQGIETLK (74 aa)). Residues 441-456 (DESRREMREQGIETLK) are compositionally biased toward basic and acidic residues.

The protein belongs to the IIV-6 067R family.

It localises to the membrane. This is an uncharacterized protein from Invertebrate iridescent virus 6 (IIV-6).